The primary structure comprises 174 residues: ATP-dependent protease subunit HslV (174 aa).

Residue T2 is part of the active site. Positions 157, 160, and 163 each coordinate Na(+).

This sequence belongs to the peptidase T1B family. HslV subfamily. In terms of assembly, a double ring-shaped homohexamer of HslV is capped on each side by a ring-shaped HslU homohexamer. The assembly of the HslU/HslV complex is dependent on binding of ATP.

The protein localises to the cytoplasm. The enzyme catalyses ATP-dependent cleavage of peptide bonds with broad specificity.. With respect to regulation, allosterically activated by HslU binding. Functionally, protease subunit of a proteasome-like degradation complex believed to be a general protein degrading machinery. The sequence is that of ATP-dependent protease subunit HslV from Shewanella frigidimarina (strain NCIMB 400).